We begin with the raw amino-acid sequence, 938 residues long: ATP-dependent 6-phosphofructokinase subunit beta (938 aa).

Residues 1–552 (MTQSLPLLNG…HLDNFMAINS (552 aa)) form an N-terminal catalytic PFK domain 1 region. ATP-binding positions include Gly-185, 249–250 (RC), and 279–282 (GDGS). Position 280 (Asp-280) interacts with Mg(2+). Beta-D-fructose 6-phosphate is bound by residues 325–327 (SID), Arg-362, 369–371 (MGR), Glu-426, Arg-454, and 460–463 (HVQR). Catalysis depends on Asp-327, which acts as the Proton acceptor. Residues 553-566 (ADHIEPKLPEHTHM) form an interdomain linker region. Positions 567–938 (KIAIVNVGAP…ADHLVGRKKL (372 aa)) are C-terminal regulatory PFK domain 2. Beta-D-fructose 2,6-bisphosphate is bound by residues Arg-637, 695 to 699 (TLSNN), Arg-733, 740 to 742 (QGG), Lys-826, 832 to 835 (HVQQ), and Arg-915.

Belongs to the phosphofructokinase type A (PFKA) family. ATP-dependent PFK group I subfamily. Eukaryotic two domain clade 'E' sub-subfamily. As to quaternary structure, heterooctamer of 4 alpha and 4 beta chains. Mg(2+) serves as cofactor.

The protein localises to the cytoplasm. The enzyme catalyses beta-D-fructose 6-phosphate + ATP = beta-D-fructose 1,6-bisphosphate + ADP + H(+). It functions in the pathway carbohydrate degradation; glycolysis; D-glyceraldehyde 3-phosphate and glycerone phosphate from D-glucose: step 3/4. Allosterically activated by ADP, AMP, or fructose 2,6-bisphosphate, and allosterically inhibited by ATP or citrate. Catalyzes the phosphorylation of D-fructose 6-phosphate to fructose 1,6-bisphosphate by ATP, the first committing step of glycolysis. This is ATP-dependent 6-phosphofructokinase subunit beta (PFK2) from Kluyveromyces lactis (strain ATCC 8585 / CBS 2359 / DSM 70799 / NBRC 1267 / NRRL Y-1140 / WM37) (Yeast).